The chain runs to 509 residues: ATP synthase subunit alpha (509 aa).

Residue 169–176 (GDRQTGKT) coordinates ATP.

It belongs to the ATPase alpha/beta chains family. F-type ATPases have 2 components, CF(1) - the catalytic core - and CF(0) - the membrane proton channel. CF(1) has five subunits: alpha(3), beta(3), gamma(1), delta(1), epsilon(1). CF(0) has four main subunits: a(1), b(1), b'(1) and c(9-12).

The protein localises to the cellular chromatophore membrane. The enzyme catalyses ATP + H2O + 4 H(+)(in) = ADP + phosphate + 5 H(+)(out). In terms of biological role, produces ATP from ADP in the presence of a proton gradient across the membrane. The alpha chain is a regulatory subunit. The chain is ATP synthase subunit alpha from Rhodobacter capsulatus (Rhodopseudomonas capsulata).